The chain runs to 149 residues: Myoglobin (149 aa).

Threonine 2 bears the N-acetylthreonine mark. The 142-residue stretch at 2–143 (TEWEHVNKVW…ICSDLETLYK (142 aa)) folds into the Globin domain. Histidine 60 is a binding site for nitrite. Histidine 60 lines the O2 pocket. Heme b is bound at residue histidine 89.

The protein belongs to the globin family. Monomeric.

Its subcellular location is the cytoplasm. The protein localises to the sarcoplasm. The catalysed reaction is Fe(III)-heme b-[protein] + nitric oxide + H2O = Fe(II)-heme b-[protein] + nitrite + 2 H(+). It carries out the reaction H2O2 + AH2 = A + 2 H2O. Functionally, monomeric heme protein which primary function is to store oxygen and facilitate its diffusion within muscle tissues. Reversibly binds oxygen through a pentacoordinated heme iron and enables its timely and efficient release as needed during periods of heightened demand. Depending on the oxidative conditions of tissues and cells, and in addition to its ability to bind oxygen, it also has a nitrite reductase activity whereby it regulates the production of bioactive nitric oxide. Under stress conditions, like hypoxia and anoxia, it also protects cells against reactive oxygen species thanks to its pseudoperoxidase activity. In Heterodontus portusjacksoni (Port Jackson shark), this protein is Myoglobin (mb).